We begin with the raw amino-acid sequence, 128 residues long: Fluoride-specific ion channel FluC (128 aa).

4 helical membrane-spanning segments follow: residues 2–22, 35–55, 67–87, and 96–116; these read FYSIVAIFVGAGLGALLRWCL, LGTLAANLLGGYVIGVAAVVF, LFVITGFLGGLTTFSTYSVEV, and FGWALAVAALHLTGSFALTAL. 2 residues coordinate Na(+): G75 and T78.

It belongs to the fluoride channel Fluc/FEX (TC 1.A.43) family.

The protein resides in the cell inner membrane. The catalysed reaction is fluoride(in) = fluoride(out). With respect to regulation, na(+) is not transported, but it plays an essential structural role and its presence is essential for fluoride channel function. Functionally, fluoride-specific ion channel. Important for reducing fluoride concentration in the cell, thus reducing its toxicity. The protein is Fluoride-specific ion channel FluC of Burkholderia cenocepacia (strain ATCC BAA-245 / DSM 16553 / LMG 16656 / NCTC 13227 / J2315 / CF5610) (Burkholderia cepacia (strain J2315)).